Consider the following 552-residue polypeptide: MELLAASRACIFFGLVTVLDAWGVQQVELSEGAWAMIDGRDVLTPTNTTTRVTKAWTFLETPPGCAGDISVKKVCVSHSLCEDNIIIGKHCNLLTGEHGIALAEFNVVNGSLRRTDDVYFVNGTVFPILAETRSVLQIHRATPSIAGVYTLHVSIDGMMKHSVVLLTVKKPPKQPQPQPRLRVKTPPPVTVPQVPVKTHTDFVVHGYHSRVYRDGESFELSVNLESHIVEPSFSAEIQWYYMNTSSSSCDLFRVFETCIFHPTAMACLHPEQHTCSFTSPIRATKILHRVYGNCSDHGNSWPSRCHSTLLGNRLYFIQPAQNRVDLLFKDTPASATGLYVFVLLYNGHPEAWTYTLLSTANHFMNVLTDVTRPRLGEHFYTDLGHKIITPHPSVATTEELGAWTRHYLAFLLVIICTCAALLVALVVWGCILYIRSNRKPYEVLNPFETVYTSVPSNDPSDEVLVFERLASDSDDSFDSDSDEELEYPPPPKPAPQLPPYQFVDGGDAPSGRSGFKVWFRDTPEASPVPLHKPTLQGPDYSRVASKLKSILK.

The first 23 residues, 1–23 (MELLAASRACIFFGLVTVLDAWG), serve as a signal peptide directing secretion. Residues 24-410 (VQQVELSEGA…GAWTRHYLAF (387 aa)) lie on the Virion surface side of the membrane. Asparagine 47 carries an N-linked (GlcNAc...) asparagine; by host glycan. The interaction with gI stretch occupies residues 65–91 (CAGDISVKKVCVSHSLCEDNIIIGKHC). Asparagine 109, asparagine 122, and asparagine 243 each carry an N-linked (GlcNAc...) asparagine; by host glycan. 2 disulfides stabilise this stretch: cysteine 249/cysteine 275 and cysteine 258/cysteine 267. Asparagine 293 carries N-linked (GlcNAc...) asparagine; by host glycosylation. Cysteine 294 and cysteine 305 are joined by a disulfide. A helical transmembrane segment spans residues 411–427 (LLVIICTCAALLVALVV). The Intravirion segment spans residues 428-552 (WGCILYIRSN…VASKLKSILK (125 aa)). The short motif at 451–454 (YTSV) is the Internalization motif element. Residues 470–478 (ASDSDDSFD) form an acidic region. Residues 473 to 486 (SDDSFDSDSDEELE) are compositionally biased toward acidic residues. Residues 473–515 (SDDSFDSDSDEELEYPPPPKPAPQLPPYQFVDGGDAPSGRSGF) are disordered. Over residues 487–498 (YPPPPKPAPQLP) the composition is skewed to pro residues.

It belongs to the alphaherpesvirinae glycoprotein E family. Interacts with gI. Phosphorylated on serines within the acidic cluster. Phosphorylation determines whether endocytosed viral gE traffics to the trans-Golgi network or recycles to the cell membrane.

Its subcellular location is the virion membrane. The protein resides in the host cell membrane. The protein localises to the host cell junction. It is found in the host Golgi apparatus membrane. It localises to the host endosome membrane. Its function is as follows. In epithelial cells, the heterodimer gE/gI is required for the cell-to-cell spread of the virus, by sorting nascent virions to cell junctions. Once the virus reaches the cell junctions, virus particles can spread to adjacent cells extremely rapidly through interactions with cellular receptors that accumulate at these junctions. Implicated in basolateral spread in polarized cells. In neuronal cells, gE/gI is essential for the anterograde spread of the infection throughout the host nervous system. Together with US9, the heterodimer gE/gI is involved in the sorting and transport of viral structural components toward axon tips. This chain is Envelope glycoprotein E (gE), found in Equine herpesvirus 1 (strain Kentucky D) (EHV-1).